Consider the following 664-residue polypeptide: Macoilin (664 aa).

The next 4 membrane-spanning stretches (helical) occupy residues 28–48, 75–95, 120–140, and 154–174; these read TFLY…DFVL, AFSV…LLFI, VCLP…AIRF, and FAAH…KSYV. Over residues 253–265 the composition is skewed to basic and acidic residues; it reads REKGKEKDKDAKK. A disordered region spans residues 253 to 274; it reads REKGKEKDKDAKKHNLGINNNN. At Ser305 the chain carries Phosphoserine. Residues 320–348 show a composition bias toward polar residues; that stretch reads KNYKNASGVVNSSPRSHSATNGSIPSSSS. The interval 320–375 is disordered; sequence KNYKNASGVVNSSPRSHSATNGSIPSSSSKNEKKQKCTSKGPSAHKDLMENCIPNN. Asn324 carries N-linked (GlcNAc...) asparagine glycosylation. The residue at position 332 (Ser332) is a Phosphoserine. 2 N-linked (GlcNAc...) asparagine glycosylation sites follow: Asn340 and Asn452. The disordered stretch occupies residues 630 to 664; that stretch reads TSPLSPVSPHYSSKFVETSPSGLDPNASVYQPLKK. Phosphoserine is present on residues Ser631 and Ser634. The N-linked (GlcNAc...) asparagine glycan is linked to Asn655.

Belongs to the macoilin family. In terms of tissue distribution, strong expression in whole nervous system up to 12.5 dpc. Highly expressed in all neuronal differentiation fields from 14.5 dpc to birth, with highest expression in the telencephalic cortical plate and mitral cells in the olfactory bulb, and lower expression in neuronal progenitor zones. Progressively decreased expression in fields of neuron precursor proliferation from 14.5 dpc and virtually undetectable there by 17.5 dpc. No significant expression detected outside the nervous system. After birth, significant expression remains in the cerebellum, olfactory bulb and hippocampus.

It is found in the rough endoplasmic reticulum membrane. The protein localises to the nucleus membrane. Functionally, plays a role in the regulation of neuronal activity. The chain is Macoilin (Maco1) from Mus musculus (Mouse).